Here is a 354-residue protein sequence, read N- to C-terminus: GRAM domain-containing protein 2A (354 aa).

The segment covering 1 to 29 (MTALSRSEATEEGGNQQMHRKTASLNSPV) has biased composition (polar residues). The interval 1–46 (MTALSRSEATEEGGNQQMHRKTASLNSPVSCKEKPDRVEEPPDYSL) is disordered. The segment covering 31 to 40 (CKEKPDRVEE) has biased composition (basic and acidic residues). The 68-residue stretch at 72 to 139 (QQYHKLFKDV…VSVQMIKKHK (68 aa)) folds into the GRAM domain. A helical transmembrane segment spans residues 312 to 332 (LLKVFFVLICFLVMSSSYLAF).

It localises to the endoplasmic reticulum membrane. Its subcellular location is the cell membrane. Its function is as follows. Participates in the organization of endoplasmic reticulum-plasma membrane contact sites (EPCS) with pleiotropic functions including STIM1 recruitment and calcium homeostasis. Constitutive tether that co-localize with ESYT2/3 tethers at endoplasmic reticulum-plasma membrane contact sites in a phosphatidylinositol lipid-dependent manner. Pre-marks the subset of phosphtidylinositol 4,5-biphosphate (PI(4,5)P2)-enriched EPCS destined for the store operated calcium entry pathway (SOCE). This is GRAM domain-containing protein 2A from Homo sapiens (Human).